Reading from the N-terminus, the 136-residue chain is MAASRYRRFLKLCEEWPVDETKRGRDLGAYLRQRVAQAFREGENTQVAEPEACDEMYESLARLHSNYYKHKYPRPRETSFSGLSLEEYKLILSTDTLDEFKEMNKGTWKKLQEKFAPGSPEGKHTAWARALPRPRT.

A mitochondrion-targeting transit peptide spans 1–13; that stretch reads MAASRYRRFLKLC. The disordered stretch occupies residues 114 to 136; sequence KFAPGSPEGKHTAWARALPRPRT.

Interacts with UQCC1. Forms a complex, named COMB/coordinator of mitochondrial CYTB biogenesis, composed of UQCC1, UQCC2, UQCC4, UQCC5 and UQCC6; stabilizes nascent cytochrome b/MT-CYB and promotes its membrane insertion. Forms a complex, named COMB/coordinator of mitochondrial CYTB biogenesis, composed of UQCC1, UQCC2, UQCC4, UQCC5 and UQCC6; stabilizes nascent cytochrome b/MT-CYB and promotes its membrane insertion. Forms a complex, named COMA, composed of UQCC1, UQCC2 and UQCC4; activates MT-CYB translation. Forms a complex, named COMC, composed of UQCC1, UQCC2; UQCC3 and UQCC4; mediates MT-CYB hemylation and association with the first nuclear-encoded CIII subunit UQCRQ.

It is found in the mitochondrion matrix. Its subcellular location is the mitochondrion nucleoid. The protein resides in the mitochondrion. The protein localises to the mitochondrion intermembrane space. It localises to the mitochondrion inner membrane. Functionally, required for the assembly of the ubiquinol-cytochrome c reductase complex (mitochondrial respiratory chain complex III or cytochrome b-c1 complex). Plays a role in the modulation of respiratory chain activities such as oxygen consumption and ATP production and via its modulation of the respiratory chain activity can regulate skeletal muscle differentiation and insulin secretion by pancreatic beta-cells. Involved in cytochrome b translation and/or stability. This Bos taurus (Bovine) protein is Ubiquinol-cytochrome c reductase complex assembly factor 2 (UQCC2).